The following is a 454-amino-acid chain: Protein IQ-DOMAIN 1 (454 aa).

A calmodulin-binding region spans residues 103-113 (GKSKEEAAAIL). In terms of domain architecture, IQ spans 107–136 (EEAAAILIQSTFRGHLARRESQVMRGQERL). The disordered stretch occupies residues 272-454 (WESSEKEQNT…KGVLKAERTP (183 aa)). A compositionally biased stretch (polar residues) spans 280–328 (NTTNNDNSSVKNSTNRNSQGGETAKSSNRNKLNSSTKPNTPSASSTATR). Residues 343–356 (KSSDDEAKSSERNR) show a composition bias toward basic and acidic residues. The segment covering 371-388 (LSSSTARRSSNLIPTTKS) has biased composition (polar residues). Low complexity predominate over residues 397–412 (TSSRVAVTTSTTEESS). Positions 421-428 (KKRLSTSA) match the Nuclear localization signal motif. Residues 442–454 (KVEKGVLKAERTP) are compositionally biased toward basic and acidic residues.

Belongs to the IQD family. In terms of assembly, binds to multiple calmodulin (CaM) in the presence of Ca(2+)(e.g. CaM1 and CaM2) and CaM-like (e.g. CML8 and CML9) proteins. Interacts with KLCR1. Expressed in roots, flowers, stems, siliques, inflorescence stems and whole shoots. Restricted to the vascular bundles.

The protein localises to the nucleus. The protein resides in the nucleolus. Its subcellular location is the cytoplasm. It localises to the cytoskeleton. May be involved in cooperative interactions with calmodulins or calmodulin-like proteins. Modulates expression of glucosinolate pathway genes. May associate with nucleic acids and regulate gene expression at the transcriptional or post-transcriptional level. Recruits KLCR1 and calmodulin proteins to microtubules, thus being a potential scaffold in cellular signaling and trafficking. In Arabidopsis thaliana (Mouse-ear cress), this protein is Protein IQ-DOMAIN 1.